The chain runs to 411 residues: Protein Rv3035 (411 aa).

This chain is Protein Rv3035, found in Mycobacterium tuberculosis (strain ATCC 25618 / H37Rv).